A 343-amino-acid chain; its full sequence is Isopentenyl-diphosphate delta-isomerase (343 aa).

9-10 (RK) is a binding site for substrate. FMN contacts are provided by residues Ser-66, 67-69 (SMT), Ser-98, and Asn-126. 98-100 (SQR) serves as a coordination point for substrate. Substrate is bound at residue Gln-161. Residue Glu-162 coordinates Mg(2+). FMN-binding positions include Lys-193, Thr-223, 273–275 (GIR), and 294–295 (AA).

The protein belongs to the IPP isomerase type 2 family. As to quaternary structure, homooctamer. Dimer of tetramers. Requires FMN as cofactor. NADPH is required as a cofactor. It depends on Mg(2+) as a cofactor.

Its subcellular location is the cytoplasm. It carries out the reaction isopentenyl diphosphate = dimethylallyl diphosphate. Involved in the biosynthesis of isoprenoids. Catalyzes the 1,3-allylic rearrangement of the homoallylic substrate isopentenyl (IPP) to its allylic isomer, dimethylallyl diphosphate (DMAPP). The protein is Isopentenyl-diphosphate delta-isomerase of Hydrogenovibrio crunogenus (strain DSM 25203 / XCL-2) (Thiomicrospira crunogena).